Reading from the N-terminus, the 650-residue chain is Threonine--tRNA ligase (650 aa).

In terms of domain architecture, TGS spans M1–T66. Residues D247–P538 form a catalytic region. Residues C338, H389, and H515 each coordinate Zn(2+).

It belongs to the class-II aminoacyl-tRNA synthetase family. As to quaternary structure, homodimer. Requires Zn(2+) as cofactor.

The protein localises to the cytoplasm. It catalyses the reaction tRNA(Thr) + L-threonine + ATP = L-threonyl-tRNA(Thr) + AMP + diphosphate + H(+). Functionally, catalyzes the attachment of threonine to tRNA(Thr) in a two-step reaction: L-threonine is first activated by ATP to form Thr-AMP and then transferred to the acceptor end of tRNA(Thr). Also edits incorrectly charged L-seryl-tRNA(Thr). The sequence is that of Threonine--tRNA ligase from Bordetella avium (strain 197N).